We begin with the raw amino-acid sequence, 392 residues long: Stilbene synthase 3 (392 aa).

Position 55–58 (K55–R58) interacts with substrate. C164 is a catalytic residue. Substrate-binding positions include L267 and G305 to P307.

This sequence belongs to the thiolase-like superfamily. Chalcone/stilbene synthases family. In terms of assembly, homodimer.

It is found in the cytoplasm. The enzyme catalyses 4-coumaroyl-CoA + 3 malonyl-CoA + 3 H(+) = trans-resveratrol + 4 CO2 + 4 CoA. It functions in the pathway phytoalexin biosynthesis; 3,4',5-trihydroxystilbene biosynthesis; 3,4',5-trihydroxystilbene from trans-4-coumarate: step 2/2. Functionally, mediates resistance to pathogens which are sensitive to stilbenes. The sequence is that of Stilbene synthase 3 from Vitis vinifera (Grape).